Reading from the N-terminus, the 188-residue chain is uncharacterized protein (188 aa).

A helical membrane pass occupies residues T136–W156.

Its subcellular location is the host membrane. This is an uncharacterized protein from Magallana gigas (Pacific oyster).